The chain runs to 263 residues: 5'-nucleotidase SurE (263 aa).

Asp-8, Asp-9, Ser-40, and Asn-93 together coordinate a divalent metal cation.

Belongs to the SurE nucleotidase family. A divalent metal cation serves as cofactor.

It localises to the cytoplasm. It catalyses the reaction a ribonucleoside 5'-phosphate + H2O = a ribonucleoside + phosphate. Functionally, nucleotidase that shows phosphatase activity on nucleoside 5'-monophosphates. The polypeptide is 5'-nucleotidase SurE (Caulobacter vibrioides (strain ATCC 19089 / CIP 103742 / CB 15) (Caulobacter crescentus)).